The following is an 83-amino-acid chain: uncharacterized protein (83 aa).

Belongs to the BolA/IbaG family.

This is an uncharacterized protein from Acinetobacter guillouiae (Acinetobacter genomosp. 11).